The sequence spans 282 residues: Protein GAM-1 (282 aa).

The short motif at 251–260 (SLQDWARLGV) is the BC-box-like element.

As to quaternary structure, interacts with host HDAC1. Interacts with host E1-activating enzyme (SAE1/UBA2 heterodimer). Interacts with host retinoblastoma protein. Seems to form a complex with host E4F1 and HDAC1. Seems to form complexes with either CUL2-elongin BC complex-RBX1 or CUL5-elongin BC complex-RBX1. Interacts with TCEB1/Elongin-C, CUL2 and CUL5 in vitro.

It localises to the host nucleus. In terms of biological role, early protein essential for viral replication. Strong and global transcriptional activator of both viral and cellular genes. Activates transcription by blocking host retinoblastoma protein (RB) and inhibiting the SUMO pathway. Inhibition of host RB leads to the activation of E2F1-dependent transcription and, in particular, of E2F1-regulated S-phase genes. Stimulation of progression from G1 to S phase allows the virus to efficiently use the cellular DNA replicating machinery to achieve viral genome replication. Blocks the SUMO pathway by targeting the E1 enzyme (SAE1/UBA2 heterodimer) to the ubiquitin-proteasome machinery. Mediates SAE1 degradation possibly through the formation of complexes with either CUL2-elongin BC complex-RBX1 or CUL5-elongin BC complex-RBX1. The degradation of UBA2 is probably a consequent effect of SAE1 disappearance. Inhibits HDAC1 sumoylation, thereby interfering with histone deacetylation mediated by HDAC1, leading to activation of transcription. Mediates induction of heat-shock response. Seems to have an antiapoptotic function. This is Protein GAM-1 from Galliformes (FAdV-1).